Reading from the N-terminus, the 723-residue chain is ABC transporter F family member 4 (723 aa).

The segment at 1-117 (MGKKKSDESA…KEQKKREAKE (117 aa)) is disordered. Basic and acidic residues predominate over residues 18 to 31 (SGKDASKDSKKEKL). Residues 50–65 (GSSSRTKAAPKSTSYT) show a composition bias toward polar residues. Residues 72–84 (PSDEEDDGESDEE) are compositionally biased toward acidic residues. A compositionally biased stretch (basic and acidic residues) spans 95–117 (KSEQRHLEISVTDKEQKKREAKE). Residues 163-423 (ITIESFSVSA…EMNKKFDVYD (261 aa)) enclose the ABC transporter 1 domain. Residue 195–202 (GPNGMGKS) coordinates ATP. 2 disordered regions span residues 256–275 (LQKSSSGADGENVDGEDDDD) and 427–472 (KAAK…APEA). Residues 266–275 (ENVDGEDDDD) are compositionally biased toward acidic residues. Residues 437–446 (QQEKVKDRAK) are compositionally biased toward basic and acidic residues. Residues 496 to 721 (LQLIEVSFSY…DLQREIKAEV (226 aa)) enclose the ABC transporter 2 domain. 530 to 537 (GPNGAGKS) lines the ATP pocket.

This sequence belongs to the ABC transporter superfamily. ABCF family. EF3 (TC 3.A.1.121) subfamily.

This chain is ABC transporter F family member 4 (ABCF4), found in Arabidopsis thaliana (Mouse-ear cress).